The sequence spans 360 residues: Photosystem II protein D1 1 (360 aa).

Residues 2–31 lie on the Cytoplasmic side of the membrane; it reads TTTLQRRESANLWERFCNWVTSTDNRLYVG. The helical transmembrane segment at 32-53 threads the bilayer; it reads WFGVIMIPTLLAATICFVIAFI. The Lumenal segment spans residues 54–110; that stretch reads AAPPVDIDGIREPVSGSLLYGNNIITGAVVPSSNAIGLHFYPIWEAASLDEWLYNGG. A helical membrane pass occupies residues 111-132; sequence PYQLIIFHFLLGASCYMGRQWE. A chlorophyll a-binding site is contributed by histidine 118. Residues tyrosine 126 and glutamine 130 each coordinate pheophytin a. Topologically, residues 133–142 are cytoplasmic; it reads LSYRLGMRPW. The helical transmembrane segment at 143 to 163 threads the bilayer; that stretch reads ICVAYSAPLASAFAVFLIYPI. Tyrosine 147 serves as a coordination point for pheophytin a. Over 164–191 the chain is Lumenal; sequence GQGSFSDGMPLGISGTFNFMIVFQAEHN. Residues aspartate 170 and glutamate 189 each coordinate [CaMn4O5] cluster. The chain crosses the membrane as a helical span at residues 192-217; it reads ILMHPFHQLGVAGVFGGALFCAMHGS. Histidine 198 serves as a coordination point for chlorophyll a. A quinone-binding positions include histidine 215 and 264–265; that span reads SF. A Fe cation-binding site is contributed by histidine 215. The Cytoplasmic segment spans residues 218-272; the sequence is LVTSSLIRETTETESANYGYKFGQEEETYNIVAAHGYFGRLIFQYASFNNSRSLH. A Fe cation-binding site is contributed by histidine 272. The helical transmembrane segment at 273 to 295 threads the bilayer; the sequence is FFLAAWPVVGVWFTALGISTMAF. Residues 296–344 are Lumenal-facing; sequence NLNGFNFNHSVIDAKGNVINTWADIINRANLGMEVMHERNAHNFPLDLA. Histidine 332, glutamate 333, aspartate 342, and alanine 344 together coordinate [CaMn4O5] cluster. Positions 345 to 360 are excised as a propeptide; it reads SAESAPVAMIAPSING.

It belongs to the reaction center PufL/M/PsbA/D family. PSII is composed of 1 copy each of membrane proteins PsbA, PsbB, PsbC, PsbD, PsbE, PsbF, PsbH, PsbI, PsbJ, PsbK, PsbL, PsbM, PsbT, PsbX, PsbY, PsbZ, Psb30/Ycf12, peripheral proteins PsbO, CyanoQ (PsbQ), PsbU, PsbV and a large number of cofactors. It forms dimeric complexes. Precursor protein interacts with Ycf48. Part of a photosystem II (PSII) assembly intermediate complex PSII-I; crystallized from a strain deleted of psbJ, it forms monomeric PSII before addition of the oxygen evolving complex. PSII-I includes 3 assembly factors not found in mature PSII (Psb27, Psb28 and Psb34). In PSII-I the C-terminus of D1 (this subunit) is already processed but not yet found at its final position. The D1/D2 heterodimer binds P680, chlorophylls that are the primary electron donor of PSII, and subsequent electron acceptors. It shares a non-heme iron and each subunit binds pheophytin, quinone, additional chlorophylls, carotenoids and lipids. D1 provides most of the ligands for the Mn4-Ca-O5 cluster of the oxygen-evolving complex (OEC). There is also a Cl(-1) ion associated with D1 and D2, which is required for oxygen evolution. PSII binds additional chlorophylls, carotenoids and specific lipids. serves as cofactor. C-terminally processed by CtpA; processing is essential to allow assembly of the oxygen-evolving complex and thus photosynthetic growth. Post-translationally, tyr-161 forms a radical intermediate that is referred to as redox-active TyrZ, YZ or Y-Z.

It is found in the cellular thylakoid membrane. The catalysed reaction is 2 a plastoquinone + 4 hnu + 2 H2O = 2 a plastoquinol + O2. Its function is as follows. Photosystem II (PSII) is a light-driven water:plastoquinone oxidoreductase that uses light energy to abstract electrons from H(2)O, generating O(2) and a proton gradient subsequently used for ATP formation. It consists of a core antenna complex that captures photons, and an electron transfer chain that converts photonic excitation into a charge separation. The D1/D2 (PsbA/PsbD) reaction center heterodimer binds P680, the primary electron donor of PSII as well as several subsequent electron acceptors. The sequence is that of Photosystem II protein D1 1 from Thermosynechococcus vestitus (strain NIES-2133 / IAM M-273 / BP-1).